We begin with the raw amino-acid sequence, 449 residues long: Required for meiotic nuclear division protein 1 homolog (449 aa).

The N-terminal 16 residues, 1 to 16 (MPATLLRAVAGSHRVL), are a transit peptide targeting the mitochondrion.

It belongs to the RMD1/sif2 family. In terms of assembly, homooligomer.

The protein localises to the mitochondrion. Its function is as follows. Required for mitochondrial translation, possibly by coordinating the assembly or maintenance of the mitochondrial ribosome. The protein is Required for meiotic nuclear division protein 1 homolog (RMND1) of Pongo abelii (Sumatran orangutan).